The following is a 147-amino-acid chain: Transcriptional regulator FurA (147 aa).

The DNA-binding stretch occupies residues 1–85 (MSSIPDYAEQ…GSVARYESRV (85 aa)). 2 residues coordinate Zn(2+): His-34 and Glu-82. A dimerization region spans residues 86–147 (GDNHHHIVCR…SISDTSRSHP (62 aa)). Residues Asp-87 and His-89 each contribute to the Fe cation site. Zn(2+) contacts are provided by His-91, Cys-94, Cys-97, and Asp-102. Glu-109 serves as a coordination point for Fe cation.

Belongs to the Fur family. In terms of assembly, homodimer.

It localises to the cytoplasm. Represses transcription of the catalase-peroxidase gene katG and its own transcription by binding to the promoter region in a redox-dependent manner. This chain is Transcriptional regulator FurA (furA), found in Mycobacterium bovis (strain ATCC BAA-935 / AF2122/97).